A 256-amino-acid polypeptide reads, in one-letter code: Ubiquinone/menaquinone biosynthesis C-methyltransferase UbiE (256 aa).

Residues threonine 79, aspartate 100, and 128 to 129 each bind S-adenosyl-L-methionine; that span reads DA.

This sequence belongs to the class I-like SAM-binding methyltransferase superfamily. MenG/UbiE family.

It catalyses the reaction a 2-demethylmenaquinol + S-adenosyl-L-methionine = a menaquinol + S-adenosyl-L-homocysteine + H(+). The catalysed reaction is a 2-methoxy-6-(all-trans-polyprenyl)benzene-1,4-diol + S-adenosyl-L-methionine = a 5-methoxy-2-methyl-3-(all-trans-polyprenyl)benzene-1,4-diol + S-adenosyl-L-homocysteine + H(+). It participates in quinol/quinone metabolism; menaquinone biosynthesis; menaquinol from 1,4-dihydroxy-2-naphthoate: step 2/2. It functions in the pathway cofactor biosynthesis; ubiquinone biosynthesis. Methyltransferase required for the conversion of demethylmenaquinol (DMKH2) to menaquinol (MKH2) and the conversion of 2-polyprenyl-6-methoxy-1,4-benzoquinol (DDMQH2) to 2-polyprenyl-3-methyl-6-methoxy-1,4-benzoquinol (DMQH2). This chain is Ubiquinone/menaquinone biosynthesis C-methyltransferase UbiE, found in Pseudomonas paraeruginosa (strain DSM 24068 / PA7) (Pseudomonas aeruginosa (strain PA7)).